The primary structure comprises 712 residues: Asp/Glu-specific dipeptidyl-peptidase (712 aa).

The signal sequence occupies residues 1–18; sequence MKRFFKMALFLGVSALYG. Residues H84, D220, and S647 each act as charge relay system in the active site.

This sequence belongs to the peptidase S46 family.

Catalyzes the removal of dipeptides from the N-terminus of oligopeptides. Shows a strict specificity for acidic residues (Asp or Glu) in the P1 position, and has probably a hydrophobic residue preference at the P2 position. Preferentially cleaves the synthetic substrate Leu-Asp-methylcoumaryl-7-amide (Leu-Asp-MCA) as compared to Leu-Glu-MCA. In Capnocytophaga gingivalis, this protein is Asp/Glu-specific dipeptidyl-peptidase (dpp11).